Here is a 184-residue protein sequence, read N- to C-terminus: Ethylene-responsive transcription factor ERF122 (184 aa).

The segment at residues 120–177 is a DNA-binding region (AP2/ERF); the sequence is KYKGVRKKPSGKWAAEIWDPRSKSRRWLGTFLTAEMAAQSYNDAAAEYRARRGKTNGE.

The protein belongs to the AP2/ERF transcription factor family. ERF subfamily.

It is found in the nucleus. Its function is as follows. Probably acts as a transcriptional activator. Binds to the GCC-box pathogenesis-related promoter element. May be involved in the regulation of gene expression by stress factors and by components of stress signal transduction pathways. This Arabidopsis thaliana (Mouse-ear cress) protein is Ethylene-responsive transcription factor ERF122 (ERF122).